Reading from the N-terminus, the 129-residue chain is Small ribosomal subunit protein uS11 (129 aa).

The protein belongs to the universal ribosomal protein uS11 family. Part of the 30S ribosomal subunit. Interacts with proteins S7 and S18. Binds to IF-3.

Located on the platform of the 30S subunit, it bridges several disparate RNA helices of the 16S rRNA. Forms part of the Shine-Dalgarno cleft in the 70S ribosome. This Nitrosomonas europaea (strain ATCC 19718 / CIP 103999 / KCTC 2705 / NBRC 14298) protein is Small ribosomal subunit protein uS11.